The sequence spans 207 residues: MARYIGPKAKLSRREGTDLFLKSARRSLADKCKLDSKPGQHGRTSGARTSDYGTQLREKQKVKRIYGVLERQFRRYFAEADRRKGNTGENLLQLLESRLDNVVYRMGFGSTRAEARQLVSHKSITVNGVVANVPSQQVKAGDIVAIREKAKKQARIVEALSLAEQGGMPSWVAVDAKKFEGTFKQMPERADIAGDINESLIVELYSR.

Positions 31-55 (KCKLDSKPGQHGRTSGARTSDYGTQ) are disordered. Over residues 42-53 (GRTSGARTSDYG) the composition is skewed to polar residues. An S4 RNA-binding domain is found at 97–160 (SRLDNVVYRM…KKQARIVEAL (64 aa)).

This sequence belongs to the universal ribosomal protein uS4 family. In terms of assembly, part of the 30S ribosomal subunit. Contacts protein S5. The interaction surface between S4 and S5 is involved in control of translational fidelity.

In terms of biological role, one of the primary rRNA binding proteins, it binds directly to 16S rRNA where it nucleates assembly of the body of the 30S subunit. With S5 and S12 plays an important role in translational accuracy. The sequence is that of Small ribosomal subunit protein uS4 from Burkholderia ambifaria (strain ATCC BAA-244 / DSM 16087 / CCUG 44356 / LMG 19182 / AMMD) (Burkholderia cepacia (strain AMMD)).